The primary structure comprises 438 residues: 23S rRNA (uracil(1939)-C(5))-methyltransferase RlmD (438 aa).

Residues 10–69 enclose the TRAM domain; it reads KASVNTKHQSVDVVRLDHNGAGIAFVDKKPVFIEGALPGEKAIIQFIEQKKQFSRAKLIK. [4Fe-4S] cluster-binding residues include Cys82, Cys88, Cys91, and Cys169. S-adenosyl-L-methionine is bound by residues Gln272, Phe301, Asn306, Glu322, Asn349, and Asp370. The active-site Nucleophile is Cys396.

Belongs to the class I-like SAM-binding methyltransferase superfamily. RNA M5U methyltransferase family. RlmD subfamily.

It carries out the reaction uridine(1939) in 23S rRNA + S-adenosyl-L-methionine = 5-methyluridine(1939) in 23S rRNA + S-adenosyl-L-homocysteine + H(+). Catalyzes the formation of 5-methyl-uridine at position 1939 (m5U1939) in 23S rRNA. The polypeptide is 23S rRNA (uracil(1939)-C(5))-methyltransferase RlmD (Aliivibrio fischeri (strain ATCC 700601 / ES114) (Vibrio fischeri)).